The sequence spans 1528 residues: Zinc finger FYVE domain-containing protein 16 (1528 aa).

Position 120 is a phosphoserine (S120). The disordered stretch occupies residues 629 to 664; the sequence is TQAVGGARPKQLLSLPPGTRSSKELNKPDVVDVPES. The segment covering 649–658 has biased composition (basic and acidic residues); sequence SSKELNKPDV. Residues 735–793 form an FYVE-type zinc finger; that stretch reads DSEAPNCMNCQVKFTFTKRRHHCRACGKVFCGVCCNRKCKLQYLEKEARVCVICYETIN. 8 residues coordinate Zn(2+): C741, C744, C757, C760, C765, C768, C785, and C788. Residues S803, S833, S884, and S927 each carry the phosphoserine modification. Residues 819 to 849 are disordered; it reads TDQPLQETQTSSTPSPTTLPISALKQPNVEG. A compositionally biased stretch (low complexity) spans 821-838; that stretch reads QPLQETQTSSTPSPTTLP. Residues 928 to 949 are disordered; that stretch reads PTCHTAPVERLPGNTGTEGLPM.

Interacts (via C-terminus) with TOM1 (via C-terminus); interaction is required to target TOM1 to endosomes. Does not interact with TOM1L1 or TOM1L2.

It localises to the cytoplasm. The protein localises to the early endosome membrane. Its function is as follows. May be involved in regulating membrane trafficking in the endosomal pathway. Overexpression induces endosome aggregation. Required to target TOM1 to endosomes. This is Zinc finger FYVE domain-containing protein 16 (Zfyve16) from Mus musculus (Mouse).